The sequence spans 128 residues: Large ribosomal subunit protein bL17 (128 aa).

The protein belongs to the bacterial ribosomal protein bL17 family. As to quaternary structure, part of the 50S ribosomal subunit. Contacts protein L32.

The protein is Large ribosomal subunit protein bL17 of Streptococcus equi subsp. equi (strain 4047).